The chain runs to 443 residues: tRNA-2-methylthio-N(6)-dimethylallyladenosine synthase (443 aa).

Positions 1–114 (MRFYIKTFGC…VTEAVKRALQ (114 aa)) constitute an MTTase N-terminal domain. The [4Fe-4S] cluster site is built by Cys10, Cys46, Cys79, Cys150, Cys154, and Cys157. In terms of domain architecture, Radical SAM core spans 136-367 (RSSKHHAWVT…MNLQKRINRK (232 aa)). Positions 370–431 (ERYKGKTVRV…AGPLYGKVVW (62 aa)) constitute a TRAM domain.

Belongs to the methylthiotransferase family. MiaB subfamily. Monomer. It depends on [4Fe-4S] cluster as a cofactor.

It localises to the cytoplasm. It catalyses the reaction N(6)-dimethylallyladenosine(37) in tRNA + (sulfur carrier)-SH + AH2 + 2 S-adenosyl-L-methionine = 2-methylsulfanyl-N(6)-dimethylallyladenosine(37) in tRNA + (sulfur carrier)-H + 5'-deoxyadenosine + L-methionine + A + S-adenosyl-L-homocysteine + 2 H(+). In terms of biological role, catalyzes the methylthiolation of N6-(dimethylallyl)adenosine (i(6)A), leading to the formation of 2-methylthio-N6-(dimethylallyl)adenosine (ms(2)i(6)A) at position 37 in tRNAs that read codons beginning with uridine. In Thermotoga sp. (strain RQ2), this protein is tRNA-2-methylthio-N(6)-dimethylallyladenosine synthase.